The following is a 75-amino-acid chain: Bacteriocin lactacin-F subunit LafA (75 aa).

A propeptide spanning residues 1 to 18 (MKQFNYLSHKDLAVVVGG) is cleaved from the precursor.

The protein belongs to the bacteriocin class IIB family. As to quaternary structure, this bacteriocin depends upon the complementation of two peptides for activity: LafA and LafX. Associated with a 180 kDa bacteriocin complex.

Functionally, heat stable bacteriocin active against Enterococcus faecalis and other Lactobacilli. The sequence is that of Bacteriocin lactacin-F subunit LafA (lafA) from Lactobacillus johnsonii (strain CNCM I-12250 / La1 / NCC 533).